Consider the following 182-residue polypeptide: Sperm acrosome-associated protein 7 (182 aa).

An N-terminal signal peptide occupies residues 1-24 (MAANRGSRTFLSVFLLCCWQGAEL). The N-linked (GlcNAc...) asparagine glycan is linked to Asn40. Basic and acidic residues predominate over residues 112–140 (LPTKEESGKNDRSTVANLHDHSSQTKHEP). The segment at 112 to 154 (LPTKEESGKNDRSTVANLHDHSSQTKHEPPSSPEGKGSSNDDV) is disordered.

In terms of tissue distribution, testis-specific. Expressed in zygotene and pachytene spermatocytes, round spermatids, elongating spermatids and spermatozoa (at protein level). Testis-specific.

The protein localises to the secreted. It localises to the cytoplasmic vesicle. The protein resides in the secretory vesicle. It is found in the acrosome lumen. In terms of biological role, involved in fertilization. Seems not to play a direct role in sperm-egg binding or gamete fusion. The chain is Sperm acrosome-associated protein 7 from Mus musculus (Mouse).